The chain runs to 61 residues: Arabinogalactan protein 15 (61 aa).

The first 22 residues, 1 to 22, serve as a signal peptide directing secretion; that stretch reads MAISKASIVVLMMVIISVVASA. Gln23 carries the post-translational modification Pyrrolidone carboxylic acid. Residues Pro27, Pro29, and Pro31 each carry the 4-hydroxyproline modification. Residues Pro27, Pro29, and Pro31 are each glycosylated (O-linked (Ara...) hydroxyproline). Ser35 is lipidated: GPI-anchor amidated serine. The propeptide at 36-61 is removed in mature form; the sequence is SAISASFVSAGVAAVAALVFGSALRI.

The protein belongs to the AG-peptide AGP family. Post-translationally, contains 4-hydroxyproline; hydroxylated on Pro-27, Pro-29 and Pro-31. O-glycosylated on hydroxyprolines; noncontiguous hydroxylproline residues are glycosylated with arabinogalactan. In terms of tissue distribution, expressed in reproductive tissues. Expressed in chalaza, funiculus, stigma, septum, style, integument and transmitting tract.

It localises to the cell membrane. In terms of biological role, proteoglycan that seems to be implicated in diverse developmental roles such as differentiation, cell-cell recognition, embryogenesis and programmed cell death. This is Arabinogalactan protein 15 from Arabidopsis thaliana (Mouse-ear cress).